Consider the following 165-residue polypeptide: Fibrinogen-binding protein (165 aa).

The signal sequence occupies residues 1 to 29 (MKNKLIAKSLLTIAAIGITTTTIASTADA).

As to quaternary structure, interacts with host fibrinogen alpha chain/FGA. Interacts with host complement protein C3.

Its subcellular location is the secreted. Functionally, extracellular fibrinogen-binding protein that plays an important role in virulence. By interacting with the alpha chain of fibrinogen and its derivative fibrin, enhances a non-functional interaction between fibrinogen and platelets and is responsible for repression of fibrinogen-dependent platelet aggregation. In addition, assembles a fibrinogen protective shield around the bacteria which results in impaired phagocytic clearance by the host. Mechanistically, interacts with host complement C3b deposited on the surface of the bacterium via its C-terminal and then recruits fibrinogen via its N-terminal. This Staphylococcus aureus protein is Fibrinogen-binding protein (fib).